A 111-amino-acid chain; its full sequence is Large ribosomal subunit protein uL24 (111 aa).

This sequence belongs to the universal ribosomal protein uL24 family. As to quaternary structure, part of the 50S ribosomal subunit.

Functionally, one of two assembly initiator proteins, it binds directly to the 5'-end of the 23S rRNA, where it nucleates assembly of the 50S subunit. Its function is as follows. One of the proteins that surrounds the polypeptide exit tunnel on the outside of the subunit. The chain is Large ribosomal subunit protein uL24 from Cytophaga hutchinsonii (strain ATCC 33406 / DSM 1761 / CIP 103989 / NBRC 15051 / NCIMB 9469 / D465).